The sequence spans 230 residues: Orotidine 5'-phosphate decarboxylase (230 aa).

Substrate-binding positions include Asp11, Lys34, 61 to 70 (DLKLHDIPNT), Thr117, Arg179, Gln188, Gly208, and Arg209. Lys63 acts as the Proton donor in catalysis.

This sequence belongs to the OMP decarboxylase family. Type 1 subfamily. Homodimer.

It carries out the reaction orotidine 5'-phosphate + H(+) = UMP + CO2. The protein operates within pyrimidine metabolism; UMP biosynthesis via de novo pathway; UMP from orotate: step 2/2. Functionally, catalyzes the decarboxylation of orotidine 5'-monophosphate (OMP) to uridine 5'-monophosphate (UMP). In Streptococcus pyogenes serotype M6 (strain ATCC BAA-946 / MGAS10394), this protein is Orotidine 5'-phosphate decarboxylase.